Consider the following 413-residue polypeptide: Gamma-glutamyl phosphate reductase (413 aa).

This sequence belongs to the gamma-glutamyl phosphate reductase family.

Its subcellular location is the cytoplasm. It catalyses the reaction L-glutamate 5-semialdehyde + phosphate + NADP(+) = L-glutamyl 5-phosphate + NADPH + H(+). Its pathway is amino-acid biosynthesis; L-proline biosynthesis; L-glutamate 5-semialdehyde from L-glutamate: step 2/2. In terms of biological role, catalyzes the NADPH-dependent reduction of L-glutamate 5-phosphate into L-glutamate 5-semialdehyde and phosphate. The product spontaneously undergoes cyclization to form 1-pyrroline-5-carboxylate. The chain is Gamma-glutamyl phosphate reductase from Salinispora tropica (strain ATCC BAA-916 / DSM 44818 / JCM 13857 / NBRC 105044 / CNB-440).